Here is a 501-residue protein sequence, read N- to C-terminus: MSSAEMGKFDISPDEDSSSYSSNSNDFSYPYPTKPAAMKSHYADMDPENQNFLLDSNVGKKKYETQYHPGTTSFGMSVFNLSNAIVGSGILGLSYAMANTGIALFVILLLVVSILSLYSVHLLLKTANEGGSLLYEQLGMKAFGMPGKLAASGSITMQNIGAMSSYLFIVKYELPLVIKTFMNIEENAGHWYLNGDYLVLLVSVILILPLSLLKNLGYLGYTSGFSLLCMVFFLIVVIWKMFQIPCPMESDIINATLINATLAPFADENITISDACKPEYFIFNSQTVYAVPILTFSFVCHPAILPIYEELKSRSRKRMMNVSYVSFFAMFLMYLLAALFGYLTFYGRVESELLHTYSAFLGADILLLIVRLAVLMAVTLTVPVVIFPIRSSVTQLLWAGKEFSWWRHCSITVVLLAFTNVLVIFVPTIRDIFGFIGASAAAMLIFILPSAFYIKLVKKEPMKSVQKIGAALFFLSGILVMTGCMTLIILDWIHTDASDGH.

Residues 1 to 26 (MSSAEMGKFDISPDEDSSSYSSNSND) are disordered. Topologically, residues 1-77 (MSSAEMGKFD…HPGTTSFGMS (77 aa)) are cytoplasmic. Residues 1–97 (MSSAEMGKFD…SGILGLSYAM (97 aa)) are regulates protein turnover upon amino acid deprivation. A helical membrane pass occupies residues 78–97 (VFNLSNAIVGSGILGLSYAM). Asparagine 83 provides a ligand contact to Na(+). Over 98–103 (ANTGIA) the chain is Extracellular. A helical membrane pass occupies residues 104 to 124 (LFVILLLVVSILSLYSVHLLL). The Cytoplasmic portion of the chain corresponds to 125–159 (KTANEGGSLLYEQLGMKAFGMPGKLAASGSITMQN). Residues 160–178 (IGAMSSYLFIVKYELPLVI) traverse the membrane as a helical segment. The Extracellular portion of the chain corresponds to 179-189 (KTFMNIEENAG). A helical transmembrane segment spans residues 190 to 210 (HWYLNGDYLVLLVSVILILPL). The Cytoplasmic segment spans residues 211–218 (SLLKNLGY). Residues 219 to 239 (LGYTSGFSLLCMVFFLIVVIW) traverse the membrane as a helical segment. Topologically, residues 240 to 287 (KMFQIPCPMESDIINATLINATLAPFADENITISDACKPEYFIFNSQT) are extracellular. Cysteines 246 and 276 form a disulfide. 2 N-linked (GlcNAc...) asparagine glycosylation sites follow: asparagine 254 and asparagine 259. A helical membrane pass occupies residues 288–308 (VYAVPILTFSFVCHPAILPIY). The Cytoplasmic segment spans residues 309–324 (EELKSRSRKRMMNVSY). The helical transmembrane segment at 325–345 (VSFFAMFLMYLLAALFGYLTF) threads the bilayer. The Extracellular portion of the chain corresponds to 346–366 (YGRVESELLHTYSAFLGADIL). The helical transmembrane segment at 367-387 (LLIVRLAVLMAVTLTVPVVIF) threads the bilayer. Position 381 (threonine 381) interacts with Na(+). The Cytoplasmic segment spans residues 388–408 (PIRSSVTQLLWAGKEFSWWRH). Residues 409–429 (CSITVVLLAFTNVLVIFVPTI) traverse the membrane as a helical segment. Over 430-431 (RD) the chain is Extracellular. A helical transmembrane segment spans residues 432-452 (IFGFIGASAAAMLIFILPSAF). At 453 to 467 (YIKLVKKEPMKSVQK) the chain is on the cytoplasmic side. A helical transmembrane segment spans residues 468 to 490 (IGAALFFLSGILVMTGCMTLIIL). Residues 491-501 (DWIHTDASDGH) are Extracellular-facing.

Belongs to the amino acid/polyamine transporter 2 family.

The protein resides in the cell membrane. It carries out the reaction L-alanine(in) + Na(+)(in) = L-alanine(out) + Na(+)(out). The enzyme catalyses glycine(in) + Na(+)(in) = glycine(out) + Na(+)(out). The catalysed reaction is L-serine(in) + Na(+)(in) = L-serine(out) + Na(+)(out). It catalyses the reaction L-proline(in) + Na(+)(in) = L-proline(out) + Na(+)(out). It carries out the reaction L-methionine(in) + Na(+)(in) = L-methionine(out) + Na(+)(out). The enzyme catalyses L-histidine(in) + Na(+)(in) = L-histidine(out) + Na(+)(out). The catalysed reaction is L-asparagine(in) + Na(+)(in) = L-asparagine(out) + Na(+)(out). It catalyses the reaction L-glutamine(in) + Na(+)(in) = L-glutamine(out) + Na(+)(out). It carries out the reaction L-threonine(in) + Na(+)(in) = L-threonine(out) + Na(+)(out). The enzyme catalyses L-leucine(in) + Na(+)(in) = L-leucine(out) + Na(+)(out). The catalysed reaction is L-phenylalanine(in) + Na(+)(in) = L-phenylalanine(out) + Na(+)(out). With respect to regulation, inhibited by N-methyl-D-glucamine. Inhibited by choline. Allosteric regulation of sodium ions binding by pH. In terms of biological role, symporter that cotransports neutral amino acids and sodium ions from the extracellular to the intracellular side of the cell membrane. The transport is pH-sensitive, Li(+)-intolerant, electrogenic, driven by the Na(+) electrochemical gradient and cotransports of neutral amino acids and sodium ions with a stoichiometry of 1:1. The chain is Sodium-coupled neutral amino acid symporter 2 from Gallus gallus (Chicken).